The primary structure comprises 399 residues: Phosphomevalonate dehydratase large subunit (399 aa).

5 residues coordinate (R)-5-phosphomevalonate: G54, V55, S56, N85, and P86. C125 serves as a coordination point for [4Fe-4S] cluster. The (R)-5-phosphomevalonate site is built by E144 and S145. C298 and C355 together coordinate [4Fe-4S] cluster. K375 serves as a coordination point for (R)-5-phosphomevalonate.

The protein belongs to the AcnX type II large subunit family. As to quaternary structure, heterodimer composed of a large subunit (PMDh-L) and a small subunit (PMDh-S). It depends on [4Fe-4S] cluster as a cofactor.

The enzyme catalyses (R)-5-phosphomevalonate = (2E)-3-methyl-5-phosphooxypent-2-enoate + H2O. It functions in the pathway isoprenoid biosynthesis; isopentenyl diphosphate biosynthesis via mevalonate pathway. Component of a hydro-lyase that catalyzes the dehydration of mevalonate 5-phosphate (MVA5P) to form trans-anhydromevalonate 5-phosphate (tAHMP). Involved in the archaeal mevalonate (MVA) pathway, which provides fundamental precursors for isoprenoid biosynthesis, such as isopentenyl diphosphate (IPP) and dimethylallyl diphosphate (DMAPP). In Methanothermobacter thermautotrophicus (strain ATCC 29096 / DSM 1053 / JCM 10044 / NBRC 100330 / Delta H) (Methanobacterium thermoautotrophicum), this protein is Phosphomevalonate dehydratase large subunit.